Consider the following 242-residue polypeptide: Dehydration-responsive element-binding protein 1J (242 aa).

Positions Ser20–Thr29 are enriched in low complexity. A disordered region spans residues Ser20–Gln44. The segment at residues Val50 to Thr109 is a DNA-binding region (AP2/ERF). Residues Phe143–Thr184 are disordered. Residues Ser148–Thr184 show a composition bias toward low complexity.

It belongs to the AP2/ERF transcription factor family. ERF subfamily.

The protein localises to the nucleus. Transcriptional activator that binds specifically to the DNA sequence 5'-[AG]CCGAC-3'. Binding to the C-repeat/DRE element mediates high salinity- and dehydration-inducible transcription. This chain is Dehydration-responsive element-binding protein 1J (DREB1J), found in Oryza sativa subsp. indica (Rice).